The chain runs to 230 residues: Porin OmpL (230 aa).

An N-terminal signal peptide occupies residues 1–20 (MKSLNTLVILTSVISTSVFA).

This sequence belongs to the oligogalacturonate-specific porin KdgM (TC 1.B.35) family. OmpL subfamily.

It localises to the cell outer membrane. Functionally, outer membrane channel protein that allows an efficient diffusion of low-molecular-weight solutes such as small sugars and tetraglycine. However, the specific substrate recognized by the OmpL channel is unknown. This Salmonella paratyphi A (strain ATCC 9150 / SARB42) protein is Porin OmpL (ompL).